We begin with the raw amino-acid sequence, 25 residues long: Ribosome-inactivating protein velutin (25 aa).

Residues X1–P25 are disordered.

The protein belongs to the ribosome-inactivating protein family.

The catalysed reaction is Endohydrolysis of the N-glycosidic bond at one specific adenosine on the 28S rRNA.. In terms of biological role, inhibits protein synthesis but does not possess ribonuclease activity. Also inhibits HIV-1 reverse transcriptase, beta-glucosidase and beta-glucuronidase. The polypeptide is Ribosome-inactivating protein velutin (Flammulina velutipes (Agaricus velutipes)).